We begin with the raw amino-acid sequence, 932 residues long: 2-oxoglutarate dehydrogenase E1 component (932 aa).

It belongs to the alpha-ketoglutarate dehydrogenase family. As to quaternary structure, homodimer. Part of the 2-oxoglutarate dehydrogenase (OGDH) complex composed of E1 (2-oxoglutarate dehydrogenase), E2 (dihydrolipoamide succinyltransferase) and E3 (dihydrolipoamide dehydrogenase); the complex contains multiple copies of the three enzymatic components (E1, E2 and E3). It depends on thiamine diphosphate as a cofactor.

It catalyses the reaction N(6)-[(R)-lipoyl]-L-lysyl-[protein] + 2-oxoglutarate + H(+) = N(6)-[(R)-S(8)-succinyldihydrolipoyl]-L-lysyl-[protein] + CO2. Its function is as follows. E1 component of the 2-oxoglutarate dehydrogenase (OGDH) complex which catalyzes the decarboxylation of 2-oxoglutarate, the first step in the conversion of 2-oxoglutarate to succinyl-CoA and CO(2). The chain is 2-oxoglutarate dehydrogenase E1 component from Staphylococcus aureus (strain bovine RF122 / ET3-1).